We begin with the raw amino-acid sequence, 470 residues long: tRNA(Ile)-lysidine synthase (470 aa).

32 to 37 (SGGVDS) serves as a coordination point for ATP.

The protein belongs to the tRNA(Ile)-lysidine synthase family.

It is found in the cytoplasm. It carries out the reaction cytidine(34) in tRNA(Ile2) + L-lysine + ATP = lysidine(34) in tRNA(Ile2) + AMP + diphosphate + H(+). Its function is as follows. Ligates lysine onto the cytidine present at position 34 of the AUA codon-specific tRNA(Ile) that contains the anticodon CAU, in an ATP-dependent manner. Cytidine is converted to lysidine, thus changing the amino acid specificity of the tRNA from methionine to isoleucine. This is tRNA(Ile)-lysidine synthase from Shewanella woodyi (strain ATCC 51908 / MS32).